Here is a 434-residue protein sequence, read N- to C-terminus: Polyadenylate-binding protein RBP47C' (434 aa).

The interval 1–50 (MADVKVQSESESSDSHPLVDYQSLPPYPPPHPPVEVEENQPKTSPTPPPP) is disordered. 3 consecutive RRM domains span residues 103 to 185 (KTIW…WASF), 199 to 278 (LSIF…PATP), and 306 to 378 (TTIF…WGRN).

The protein belongs to the polyadenylate-binding RBP47 family. Interacts with the poly(A) tail of mRNA in nucleus.

The protein resides in the nucleus. The protein localises to the cytoplasmic granule. Functionally, heterogeneous nuclear ribonucleoprotein (hnRNP)-protein binding the poly(A) tail of mRNA and probably involved in some steps of pre-mRNA maturation. The protein is Polyadenylate-binding protein RBP47C' (RBP47C') of Arabidopsis thaliana (Mouse-ear cress).